We begin with the raw amino-acid sequence, 682 residues long: Methionine--tRNA ligase (682 aa).

Positions 15–25 (PYANGAIHLGH) match the 'HIGH' region motif. Residues Cys146, Cys149, Cys159, and Cys162 each coordinate Zn(2+). The 'KMSKS' region signature appears at 331-335 (KMSKS). An ATP-binding site is contributed by Lys334. The tRNA-binding domain maps to 580 to 682 (DFAKLDMRVA…SGVTAGMQVK (103 aa)).

The protein belongs to the class-I aminoacyl-tRNA synthetase family. MetG type 1 subfamily. In terms of assembly, homodimer. Zn(2+) is required as a cofactor.

Its subcellular location is the cytoplasm. It catalyses the reaction tRNA(Met) + L-methionine + ATP = L-methionyl-tRNA(Met) + AMP + diphosphate. Its function is as follows. Is required not only for elongation of protein synthesis but also for the initiation of all mRNA translation through initiator tRNA(fMet) aminoacylation. This chain is Methionine--tRNA ligase, found in Haemophilus influenzae (strain PittEE).